Reading from the N-terminus, the 576-residue chain is S-layer protein (576 aa).

An N-terminal signal peptide occupies residues 1-23 (KKIGAIAAGSAMVASALATGVFA). 2 N-linked (GlcNAc...) asparagine glycosylation sites follow: N102 and N132.

Belongs to the Mj S-layer protein family. N-linked glycans consist of the 779 Da trisaccharide beta-ManNAc(Thr)-(1-4)-beta-GlcNAc3NAcA-(1-3)-beta-GlcNAc.

It localises to the secreted. The protein localises to the cell wall. Its subcellular location is the S-layer. S-layer protein. The S-layer is a paracrystalline mono-layered assembly of proteins which coat the surface of the cell. This Methanococcus voltae protein is S-layer protein (sla).